The sequence spans 88 residues: Cell division topological specificity factor (88 aa).

It belongs to the MinE family.

Its function is as follows. Prevents the cell division inhibition by proteins MinC and MinD at internal division sites while permitting inhibition at polar sites. This ensures cell division at the proper site by restricting the formation of a division septum at the midpoint of the long axis of the cell. This Aeromonas hydrophila subsp. hydrophila (strain ATCC 7966 / DSM 30187 / BCRC 13018 / CCUG 14551 / JCM 1027 / KCTC 2358 / NCIMB 9240 / NCTC 8049) protein is Cell division topological specificity factor.